A 154-amino-acid chain; its full sequence is Ribosome maturation factor RimP (154 aa).

The protein belongs to the RimP family.

It is found in the cytoplasm. Its function is as follows. Required for maturation of 30S ribosomal subunits. This chain is Ribosome maturation factor RimP, found in Desulforudis audaxviator (strain MP104C).